We begin with the raw amino-acid sequence, 587 residues long: Barrierpepsin (587 aa).

An N-terminal signal peptide occupies residues 1-24; that stretch reads MSAINHLCLKLILASFAIINTITA. In terms of domain architecture, Peptidase A1 spans 45–393; it reads YATTLDIGTP…DLDNYKISLA (349 aa). D63 is an active-site residue. N-linked (GlcNAc...) asparagine glycosylation is found at N84, N90, and N268. D287 is an active-site residue. N308 carries an N-linked (GlcNAc...) asparagine glycan. C322 and C358 are oxidised to a cystine. N366, N398, N468, N503, and N551 each carry an N-linked (GlcNAc...) asparagine glycan. The interval 466–505 is disordered; sequence SRNCSTKMPGTRSTTVLSKPTQNSAMHQSTGAVTQTSNET.

This sequence belongs to the peptidase A1 family.

It is found in the secreted. It catalyses the reaction Selective cleavage of 6-Leu-|-Lys-7 bond in the pheromone alpha-mating factor.. In terms of biological role, this protein called 'barrier activity' is excreted by yeast cells mating type a. It is probably a protease that cleaves alpha-factor and thus acts as an antagonist of this mating pheromone and establishes optimal pheromone concentration for conjugation. The polypeptide is Barrierpepsin (BAR1) (Saccharomyces cerevisiae (strain ATCC 204508 / S288c) (Baker's yeast)).